We begin with the raw amino-acid sequence, 176 residues long: RNA pyrophosphohydrolase (176 aa).

The Nudix hydrolase domain maps to 6-149 (GYRPNVGIII…KRNVYEMALT (144 aa)). Residues 38–59 (GGIKPGESPEAAMYRELMEEVG) carry the Nudix box motif.

Belongs to the Nudix hydrolase family. RppH subfamily. A divalent metal cation serves as cofactor.

In terms of biological role, accelerates the degradation of transcripts by removing pyrophosphate from the 5'-end of triphosphorylated RNA, leading to a more labile monophosphorylated state that can stimulate subsequent ribonuclease cleavage. This chain is RNA pyrophosphohydrolase, found in Laribacter hongkongensis (strain HLHK9).